Reading from the N-terminus, the 285-residue chain is ATP synthase gamma chain (285 aa).

The protein belongs to the ATPase gamma chain family. In terms of assembly, F-type ATPases have 2 components, CF(1) - the catalytic core - and CF(0) - the membrane proton channel. CF(1) has five subunits: alpha(3), beta(3), gamma(1), delta(1), epsilon(1). CF(0) has three main subunits: a, b and c.

The protein resides in the cell membrane. In terms of biological role, produces ATP from ADP in the presence of a proton gradient across the membrane. The gamma chain is believed to be important in regulating ATPase activity and the flow of protons through the CF(0) complex. In Lysinibacillus sphaericus (strain C3-41), this protein is ATP synthase gamma chain.